Here is a 419-residue protein sequence, read N- to C-terminus: Carboxypeptidase A1 (419 aa).

The signal sequence occupies residues 1 to 16 (MKRLLVLSVLLAAVFG). A propeptide spans 17 to 110 (NENFVGHQVL…KQQMSAFQAR (94 aa)) (activation peptide). Residues 121-414 (TYHTLDEIYE…LALLTIMDHT (294 aa)) enclose the Peptidase M14 domain. Zn(2+) contacts are provided by His179 and Glu182. Substrate is bound by residues 179–182 (HSRE), Arg237, and 254–255 (NR). Cys248 and Cys271 form a disulfide bridge. His306 contributes to the Zn(2+) binding site. Residues 307–308 (SY) and Tyr358 each bind substrate. The active-site Proton donor/acceptor is the Glu380.

Belongs to the peptidase M14 family. Monomer. Zn(2+) is required as a cofactor.

It is found in the secreted. The enzyme catalyses Release of a C-terminal amino acid, but little or no action with -Asp, -Glu, -Arg, -Lys or -Pro.. In terms of biological role, carboxypeptidase that catalyzes the release of a C-terminal amino acid, but has little or no action with -Asp, -Glu, -Arg, -Lys or -Pro. The chain is Carboxypeptidase A1 (Cpa1) from Mus musculus (Mouse).